We begin with the raw amino-acid sequence, 407 residues long: Probable tRNA sulfurtransferase (407 aa).

The 105-residue stretch at 61 to 165 (EEMCNRLKKV…LDAIYMYDQV (105 aa)) folds into the THUMP domain. Residues 183–184 (ML), 208–209 (HF), arginine 265, glycine 287, and glutamine 296 contribute to the ATP site.

The protein belongs to the ThiI family.

Its subcellular location is the cytoplasm. It carries out the reaction [ThiI sulfur-carrier protein]-S-sulfanyl-L-cysteine + a uridine in tRNA + 2 reduced [2Fe-2S]-[ferredoxin] + ATP + H(+) = [ThiI sulfur-carrier protein]-L-cysteine + a 4-thiouridine in tRNA + 2 oxidized [2Fe-2S]-[ferredoxin] + AMP + diphosphate. The enzyme catalyses [ThiS sulfur-carrier protein]-C-terminal Gly-Gly-AMP + S-sulfanyl-L-cysteinyl-[cysteine desulfurase] + AH2 = [ThiS sulfur-carrier protein]-C-terminal-Gly-aminoethanethioate + L-cysteinyl-[cysteine desulfurase] + A + AMP + 2 H(+). Its pathway is cofactor biosynthesis; thiamine diphosphate biosynthesis. Its function is as follows. Catalyzes the ATP-dependent transfer of a sulfur to tRNA to produce 4-thiouridine in position 8 of tRNAs, which functions as a near-UV photosensor. Also catalyzes the transfer of sulfur to the sulfur carrier protein ThiS, forming ThiS-thiocarboxylate. This is a step in the synthesis of thiazole, in the thiamine biosynthesis pathway. The sulfur is donated as persulfide by IscS. The sequence is that of Probable tRNA sulfurtransferase from Staphylococcus saprophyticus subsp. saprophyticus (strain ATCC 15305 / DSM 20229 / NCIMB 8711 / NCTC 7292 / S-41).